A 1432-amino-acid chain; its full sequence is Gag-Pol polyprotein (1432 aa).

Gly-2 carries the N-myristoyl glycine; by host lipid modification. The interval 7–31 is interaction with Gp41; it reads VLSGGKLDTWERIRLRPGGKKKYAL. The segment at 8 to 43 is interaction with host CALM1; the sequence is LSGGKLDTWERIRLRPGGKKKYALKHLIWASRELER. Residues 12–19 are interaction with host AP3D1; it reads KLDTWERI. Residues 14–33 form an interaction with membrane phosphatidylinositol 4,5-bisphosphate and RNA region; that stretch reads DTWERIRLRPGGKKKYALKH. Residues 16–22 carry the Nuclear export signal motif; the sequence is WERIRLR. The Nuclear localization signal signature appears at 26-32; sequence KKKYALK. The segment at 73–77 is interaction with membrane phosphatidylinositol 4,5-bisphosphate; sequence EEIRS. The tract at residues 102-125 is disordered; sequence EKMEEEQNKSKKKTQQAAADSSQV. Residues 116-125 are compositionally biased toward low complexity; sequence QQAAADSSQV. Residue Tyr-129 is modified to Phosphotyrosine; by host. The segment at 186–224 is interaction with human PPIA/CYPA and NUP153; the sequence is NTVGGHQAAMQMLKETINDEAAEWDRLHPVHAGPVAPGQ. The segment at 274-360 is dimerization/Multimerization of capsid protein p24; that stretch reads YSPVSILDIR…GGPGHKARVL (87 aa). 2 consecutive CCHC-type zinc fingers follow at residues 388 to 405 and 409 to 426; these read IKCF…NCRA and KGCW…DCTE. The tract at residues 486-490 is dimerization of protease; the sequence is PQITL. Positions 505-574 constitute a Peptidase A2 domain; that stretch reads KEALLDTGAD…TPVNIIGRNL (70 aa). The active-site For protease activity; shared with dimeric partner is Asp-510. Dimerization of protease regions lie at residues 534–540 and 573–585; these read GIGGFIK and NLLT…LNFP. In terms of domain architecture, Reverse transcriptase spans 628–818; that stretch reads EGKISRIGPE…PPFLWMGYEL (191 aa). Asp-694, Asp-769, and Asp-770 together coordinate Mg(2+). The segment at 811–819 is RT 'primer grip'; it reads FLWMGYELH. Positions 982–998 match the Tryptophan repeat motif motif; the sequence is WETWWIEYWQATWIPEW. In terms of domain architecture, RNase H type-1 spans 1018–1141; that stretch reads IIGAETFYVD…VDKLVSQGIR (124 aa). Mg(2+) is bound by residues Asp-1027, Glu-1062, Asp-1082, and Asp-1133. The Integrase-type zinc-finger motif lies at 1147–1188; sequence DGIDKAQEEHEKYHNNWRAMASDFNLPPVVAKEIVASCDKCQ. Zn(2+) contacts are provided by His-1156, His-1160, Cys-1184, and Cys-1187. One can recognise an Integrase catalytic domain in the interval 1198–1348; it reads VDCSPGIWQL…SAGERIIDII (151 aa). Residues Asp-1208, Asp-1260, and Glu-1296 each coordinate Mg(2+). The segment at residues 1367–1414 is a DNA-binding region (integrase-type); that stretch reads FRVYYRDSRDPIWKGPAKLLWKGEGAVVIQDNSDIKVVPRRKVKIIRD.

Homotrimer; further assembles as hexamers of trimers. Interacts with gp41 (via C-terminus). Interacts with host CALM1; this interaction induces a conformational change in the Matrix protein, triggering exposure of the myristate group. Interacts with host AP3D1; this interaction allows the polyprotein trafficking to multivesicular bodies during virus assembly. Part of the pre-integration complex (PIC) which is composed of viral genome, matrix protein, Vpr and integrase. In terms of assembly, homodimer; the homodimer further multimerizes as homohexamers or homopentamers. Interacts with human PPIA/CYPA; This interaction stabilizes the capsid. Interacts with human NUP153. Interacts with host PDZD8; this interaction stabilizes the capsid. Interacts with monkey TRIM5; this interaction destabilizes the capsid. As to quaternary structure, homodimer, whose active site consists of two apposed aspartic acid residues. Heterodimer of p66 RT and p51 RT (RT p66/p51). Heterodimerization of RT is essential for DNA polymerase activity. The overall folding of the subdomains is similar in p66 RT and p51 RT but the spatial arrangements of the subdomains are dramatically different. In terms of assembly, homotetramer; may further associate as a homohexadecamer. Part of the pre-integration complex (PIC) which is composed of viral genome, matrix protein, Vpr and integrase. Interacts with human SMARCB1/INI1 and human PSIP1/LEDGF isoform 1. Interacts with human KPNA3; this interaction might play a role in nuclear import of the pre-integration complex. Interacts with human NUP153; this interaction might play a role in nuclear import of the pre-integration complex. Mg(2+) is required as a cofactor. Specific enzymatic cleavages by the viral protease yield mature proteins. The protease is released by autocatalytic cleavage. The polyprotein is cleaved during and after budding, this process is termed maturation. Proteolytic cleavage of p66 RT removes the RNase H domain to yield the p51 RT subunit. Nucleocapsid protein p7 might be further cleaved after virus entry. Post-translationally, tyrosine phosphorylated presumably in the virion by a host kinase. Phosphorylation is apparently not a major regulator of membrane association. In terms of processing, phosphorylated possibly by host MAPK1; this phosphorylation is necessary for Pin1-mediated virion uncoating. Methylated by host PRMT6, impairing its function by reducing RNA annealing and the initiation of reverse transcription.

Its subcellular location is the host cell membrane. The protein resides in the host endosome. The protein localises to the host multivesicular body. It is found in the virion membrane. It localises to the host nucleus. Its subcellular location is the host cytoplasm. The protein resides in the virion. The catalysed reaction is Specific for a P1 residue that is hydrophobic, and P1' variable, but often Pro.. It catalyses the reaction Endohydrolysis of RNA in RNA/DNA hybrids. Three different cleavage modes: 1. sequence-specific internal cleavage of RNA. Human immunodeficiency virus type 1 and Moloney murine leukemia virus enzymes prefer to cleave the RNA strand one nucleotide away from the RNA-DNA junction. 2. RNA 5'-end directed cleavage 13-19 nucleotides from the RNA end. 3. DNA 3'-end directed cleavage 15-20 nucleotides away from the primer terminus.. The enzyme catalyses 3'-end directed exonucleolytic cleavage of viral RNA-DNA hybrid.. It carries out the reaction DNA(n) + a 2'-deoxyribonucleoside 5'-triphosphate = DNA(n+1) + diphosphate. The viral protease is inhibited by many synthetic protease inhibitors (PIs), such as amprenavir, atazanavir, indinavir, loprinavir, nelfinavir, ritonavir and saquinavir. RT can be inhibited either by nucleoside RT inhibitors (NRTIs) or by non nucleoside RT inhibitors (NNRTIs). NRTIs act as chain terminators, whereas NNRTIs inhibit DNA polymerization by binding a small hydrophobic pocket near the RT active site and inducing an allosteric change in this region. Classical NRTIs are abacavir, adefovir (PMEA), didanosine (ddI), lamivudine (3TC), stavudine (d4T), tenofovir (PMPA), zalcitabine (ddC), and zidovudine (AZT). Classical NNRTIs are atevirdine (BHAP U-87201E), delavirdine, efavirenz (DMP-266), emivirine (I-EBU), and nevirapine (BI-RG-587). The tritherapies used as a basic effective treatment of AIDS associate two NRTIs and one NNRTI. Use of protease inhibitors in tritherapy regimens permit more ambitious therapeutic strategies. Its function is as follows. Gag-Pol polyprotein and Gag polyprotein may regulate their own translation, by the binding genomic RNA in the 5'-UTR. At low concentration, Gag-Pol and Gag would promote translation, whereas at high concentration, the polyproteins encapsidate genomic RNA and then shut off translation. In terms of biological role, matrix protein p17 targets Gag and Gag-pol polyproteins to the plasma membrane via a multipartite membrane-binding signal, that includes its myristoylated N-terminus. Matrix protein is part of the pre-integration complex. Implicated in the release from host cell mediated by Vpu. Binds to RNA. Forms the conical core that encapsulates the genomic RNA-nucleocapsid complex in the virion. Most core are conical, with only 7% tubular. The core is constituted by capsid protein hexamer subunits. The core is disassembled soon after virion entry. Host restriction factors such as TRIM5-alpha or TRIMCyp bind retroviral capsids and cause premature capsid disassembly, leading to blocks in reverse transcription. Capsid restriction by TRIM5 is one of the factors which restricts HIV-1 to the human species. Host PIN1 apparently facilitates the virion uncoating. On the other hand, interactions with PDZD8 or CYPA stabilize the capsid. Functionally, nucleocapsid protein p7 encapsulates and protects viral dimeric unspliced genomic RNA (gRNA). Binds these RNAs through its zinc fingers. Acts as a nucleic acid chaperone which is involved in rearangement of nucleic acid secondary structure during gRNA retrotranscription. Also facilitates template switch leading to recombination. As part of the polyprotein, participates in gRNA dimerization, packaging, tRNA incorporation and virion assembly. Its function is as follows. The aspartyl protease mediates proteolytic cleavages of Gag and Gag-Pol polyproteins during or shortly after the release of the virion from the plasma membrane. Cleavages take place as an ordered, step-wise cascade to yield mature proteins. This process is called maturation. Displays maximal activity during the budding process just prior to particle release from the cell. Also cleaves Nef and Vif, probably concomitantly with viral structural proteins on maturation of virus particles. Hydrolyzes host EIF4GI and PABP1 in order to shut off the capped cellular mRNA translation. The resulting inhibition of cellular protein synthesis serves to ensure maximal viral gene expression and to evade host immune response. Also mediates cleavage of host YTHDF3. Mediates cleavage of host CARD8, thereby activating the CARD8 inflammasome, leading to the clearance of latent HIV-1 in patient CD4(+) T-cells after viral reactivation; in contrast, HIV-1 can evade CARD8-sensing when its protease remains inactive in infected cells prior to viral budding. In terms of biological role, reverse transcriptase/ribonuclease H (RT) is a multifunctional enzyme that converts the viral RNA genome into dsDNA in the cytoplasm, shortly after virus entry into the cell. This enzyme displays a DNA polymerase activity that can copy either DNA or RNA templates, and a ribonuclease H (RNase H) activity that cleaves the RNA strand of RNA-DNA heteroduplexes in a partially processive 3' to 5' endonucleasic mode. Conversion of viral genomic RNA into dsDNA requires many steps. A tRNA(3)-Lys binds to the primer-binding site (PBS) situated at the 5'-end of the viral RNA. RT uses the 3' end of the tRNA primer to perform a short round of RNA-dependent minus-strand DNA synthesis. The reading proceeds through the U5 region and ends after the repeated (R) region which is present at both ends of viral RNA. The portion of the RNA-DNA heteroduplex is digested by the RNase H, resulting in a ssDNA product attached to the tRNA primer. This ssDNA/tRNA hybridizes with the identical R region situated at the 3' end of viral RNA. This template exchange, known as minus-strand DNA strong stop transfer, can be either intra- or intermolecular. RT uses the 3' end of this newly synthesized short ssDNA to perform the RNA-dependent minus-strand DNA synthesis of the whole template. RNase H digests the RNA template except for two polypurine tracts (PPTs) situated at the 5'-end and near the center of the genome. It is not clear if both polymerase and RNase H activities are simultaneous. RNase H probably can proceed both in a polymerase-dependent (RNA cut into small fragments by the same RT performing DNA synthesis) and a polymerase-independent mode (cleavage of remaining RNA fragments by free RTs). Secondly, RT performs DNA-directed plus-strand DNA synthesis using the PPTs that have not been removed by RNase H as primers. PPTs and tRNA primers are then removed by RNase H. The 3' and 5' ssDNA PBS regions hybridize to form a circular dsDNA intermediate. Strand displacement synthesis by RT to the PBS and PPT ends produces a blunt ended, linear dsDNA copy of the viral genome that includes long terminal repeats (LTRs) at both ends. Catalyzes viral DNA integration into the host chromosome, by performing a series of DNA cutting and joining reactions. This enzyme activity takes place after virion entry into a cell and reverse transcription of the RNA genome in dsDNA. The first step in the integration process is 3' processing. This step requires a complex comprising the viral genome, matrix protein, Vpr and integrase. This complex is called the pre-integration complex (PIC). The integrase protein removes 2 nucleotides from each 3' end of the viral DNA, leaving recessed CA OH's at the 3' ends. In the second step, the PIC enters cell nucleus. This process is mediated through integrase and Vpr proteins, and allows the virus to infect a non dividing cell. This ability to enter the nucleus is specific of lentiviruses, other retroviruses cannot and rely on cell division to access cell chromosomes. In the third step, termed strand transfer, the integrase protein joins the previously processed 3' ends to the 5' ends of strands of target cellular DNA at the site of integration. The 5'-ends are produced by integrase-catalyzed staggered cuts, 5 bp apart. A Y-shaped, gapped, recombination intermediate results, with the 5'-ends of the viral DNA strands and the 3' ends of target DNA strands remaining unjoined, flanking a gap of 5 bp. The last step is viral DNA integration into host chromosome. This involves host DNA repair synthesis in which the 5 bp gaps between the unjoined strands are filled in and then ligated. Since this process occurs at both cuts flanking the HIV genome, a 5 bp duplication of host DNA is produced at the ends of HIV-1 integration. Alternatively, Integrase may catalyze the excision of viral DNA just after strand transfer, this is termed disintegration. In Homo sapiens (Human), this protein is Gag-Pol polyprotein (gag-pol).